The sequence spans 362 residues: G-prodeshotein coupled receptor 4 (362 aa).

Topologically, residues 1–8 are extracellular; sequence MGNHTWEG. N-linked (GlcNAc...) asparagine glycosylation occurs at asparagine 3. Residues 9 to 45 traverse the membrane as a helical segment; it reads CHVDSRVDHLFPPSLYIFVIGVGLPTNCLALWAAYRQ. Intrachain disulfides connect cysteine 9–cysteine 258 and cysteine 90–cysteine 168. Residues 46–49 are Cytoplasmic-facing; the sequence is VQQR. Residues 50–80 form a helical membrane-spanning segment; sequence NELGVYLMNLSIADLLYICTLPLWVDYFLHH. Topologically, residues 81–85 are extracellular; the sequence is DNWIH. The helical transmembrane segment at 86 to 121 threads the bilayer; the sequence is GPGSCKLFGFIFYTNIYISIAFLCCISVDRYLAVAH. Residues 122 to 129 lie on the Cytoplasmic side of the membrane; the sequence is PLRFARLR. The chain crosses the membrane as a helical span at residues 130-156; that stretch reads RVKTAVAVSSVVWATELGANSAPLFHD. The Extracellular portion of the chain corresponds to 157–172; the sequence is ELFRDRYNHTFCFEKF. The segment at 157–172 is extracellular loop 2 (ECL2); sequence ELFRDRYNHTFCFEKF. An N-linked (GlcNAc...) asparagine glycan is attached at asparagine 164. The helical transmembrane segment at 173-210 threads the bilayer; that stretch reads PMEGWVAWMNLYRVFVGFLFPWALMLLSYRGILRAVRG. Over 211-214 the chain is Cytoplasmic; the sequence is SVST. A helical transmembrane segment spans residues 215–250; that stretch reads ERQEKAKIKRLALSLIAIVLVCFAPYHVLLLSRSAI. Topologically, residues 251–260 are extracellular; that stretch reads YLGRPWDCGF. The helical transmembrane segment at 261–289 threads the bilayer; the sequence is EERVFSAYHSSLAFTSLNCVADPILYCLV. The Cytoplasmic segment spans residues 290–362; the sequence is NEGARSDVAK…VQLKMLPPAQ (73 aa). A disordered region spans residues 335–362; sequence AKAMTGSWAATPPSQGDQVQLKMLPPAQ.

It belongs to the G-protein coupled receptor 1 family.

Its subcellular location is the cell membrane. With respect to regulation, activated by a network of residues that connects an extracellular-facing cavity to Glu-145, a conserved charged residue buried in the transmembrane core of the receptor. Protonation likely drives conformational changes in extracellular loop 2 (ECL2), which stabilizes movement of transmembrane 3 (TM3) and a series of rearrangements that connect the extracellular-facing cavity to Glu-145, a residue only conserved in proton-sensing G-protein coupled receptors. Proton-sensing G-protein coupled receptor activated by extracellular pH, which is required to monitor pH changes and generate adaptive reactions. Activated by an optimal pH of 6.8-7.2. Ligand binding causes a conformation change that triggers signaling via guanine nucleotide-binding proteins (G proteins) and modulates the activity of downstream effectors, such as adenylate cyclase. GPR4 is mainly coupled to G(s) G proteins and mediates activation of adenylate cyclase activity. May also couple with G(q) and G(12)/G(13) G proteins. Acts as a key regulator of respiratory sensitivity to CO2/H(+) in brain retrotrapezoid nucleus neurons: acts by mediating detection of protons generated by the formation of carbonic acid in the blood, an important mechanism to impulse to breathe. Also acts as a regulator of acid secretion in the kidney collecting duct by maintaining acid-base homeostasis in the kidney. Acidosis-induced GPR4 activation increases paracellular gap formation and permeability of vascular endothelial cells, possibly through the G(12)/G(13)/Rho GTPase signaling pathway. The chain is G-prodeshotein coupled receptor 4 from Homo sapiens (Human).